A 213-amino-acid polypeptide reads, in one-letter code: LexA repressor 2 (213 aa).

Residues 27–47 (QTEIARAFGFKGVRAAQYHLE) constitute a DNA-binding region (H-T-H motif). Active-site for autocatalytic cleavage activity residues include S133 and K170.

This sequence belongs to the peptidase S24 family. As to quaternary structure, homodimer.

The catalysed reaction is Hydrolysis of Ala-|-Gly bond in repressor LexA.. Functionally, represses a number of genes involved in the response to DNA damage (SOS response), including recA and lexA. In the presence of single-stranded DNA, RecA interacts with LexA causing an autocatalytic cleavage which disrupts the DNA-binding part of LexA, leading to derepression of the SOS regulon and eventually DNA repair. The chain is LexA repressor 2 from Xanthomonas campestris pv. campestris (strain ATCC 33913 / DSM 3586 / NCPPB 528 / LMG 568 / P 25).